The chain runs to 92 residues: Small ribosomal subunit protein uS19 (92 aa).

This sequence belongs to the universal ribosomal protein uS19 family.

In terms of biological role, protein S19 forms a complex with S13 that binds strongly to the 16S ribosomal RNA. The protein is Small ribosomal subunit protein uS19 of Geobacillus kaustophilus (strain HTA426).